Reading from the N-terminus, the 431-residue chain is Glutamate-1-semialdehyde 2,1-aminomutase (431 aa).

K269 is modified (N6-(pyridoxal phosphate)lysine).

Belongs to the class-III pyridoxal-phosphate-dependent aminotransferase family. HemL subfamily. Homodimer. Pyridoxal 5'-phosphate is required as a cofactor.

The protein resides in the cytoplasm. The enzyme catalyses (S)-4-amino-5-oxopentanoate = 5-aminolevulinate. Its pathway is porphyrin-containing compound metabolism; protoporphyrin-IX biosynthesis; 5-aminolevulinate from L-glutamyl-tRNA(Glu): step 2/2. It participates in porphyrin-containing compound metabolism; chlorophyll biosynthesis. This chain is Glutamate-1-semialdehyde 2,1-aminomutase, found in Chlorobium phaeobacteroides (strain DSM 266 / SMG 266 / 2430).